The sequence spans 535 residues: MKAIDNQIRNISSSHQDKHSDKVNSHQHHGKVDKTHRAKIVEFDKLDNDSQIDNDFGLHIIYFLQHGHWKVNDRSHQMEKVWFYNSEPSIDIQEYNRFADNTTDTFIFTIIPDNNHVLKLSSPITVTVECKGGYYFINSSGDKSDIIYKVDGLSIIARNFFTLLSGNFKPDWRWDVSKETFTKEKFDSYVKSVFSKIDFYKQCGVINPQNANTAYFGDTDGRVGAVLYALLVSGHIGIREKGWSLLCELLKHEEMASSAYKHKNNKVLYDLLNTRDMILNELHQHVFLKDDAITPCIFLGDHTGDRFSTIFGDKYILTLLNSMRNMEGNKDSRINKNVVVLAGNHEINFNGNYTARLANHKLSAGDTYNLIKTLDVCNYDSERQVLTSHHGIIRDEEKKCYCLGALQVPFNQMKNPTDPEELANIFNKKHKEHMDDPLFHLIRSNTLKPTPVYANYFDNTTDFRPARERIFICGETLKGEDPSKYIRQKYGHHGPGVDHNQQFDNGIMGLNSLKEARDKNNKIIYSSGLSCFQLH.

Residues 1–34 (MKAIDNQIRNISSSHQDKHSDKVNSHQHHGKVDK) form a disordered region. Over residues 15 to 34 (HQDKHSDKVNSHQHHGKVDK) the composition is skewed to basic and acidic residues.

This is an uncharacterized protein from Escherichia coli (strain K12).